Reading from the N-terminus, the 380-residue chain is Cytochrome b (380 aa).

4 helical membrane-spanning segments follow: residues 34–54 (FGSL…LLAM), 78–99 (WLIR…YLHI), 114–134 (WNTG…GYVL), and 179–199 (FFAL…IHLT). Residues His-84 and His-98 each coordinate heme b. The heme b site is built by His-183 and His-197. Residue His-202 coordinates a ubiquinone. The next 4 helical transmembrane spans lie at 227–247 (LKDL…ALFT), 289–309 (LGGV…PFLH), 321–341 (LSQL…WVGS), and 348–368 (FIII…VLLP).

This sequence belongs to the cytochrome b family. As to quaternary structure, the cytochrome bc1 complex contains 11 subunits: 3 respiratory subunits (MT-CYB, CYC1 and UQCRFS1), 2 core proteins (UQCRC1 and UQCRC2) and 6 low-molecular weight proteins (UQCRH/QCR6, UQCRB/QCR7, UQCRQ/QCR8, UQCR10/QCR9, UQCR11/QCR10 and a cleavage product of UQCRFS1). This cytochrome bc1 complex then forms a dimer. The cofactor is heme b.

It localises to the mitochondrion inner membrane. In terms of biological role, component of the ubiquinol-cytochrome c reductase complex (complex III or cytochrome b-c1 complex) that is part of the mitochondrial respiratory chain. The b-c1 complex mediates electron transfer from ubiquinol to cytochrome c. Contributes to the generation of a proton gradient across the mitochondrial membrane that is then used for ATP synthesis. The polypeptide is Cytochrome b (MT-CYB) (Herpetotheres cachinnans (Laughing falcon)).